A 276-amino-acid polypeptide reads, in one-letter code: 4-deoxy-L-threo-5-hexosulose-uronate ketol-isomerase (276 aa).

The Zn(2+) site is built by His-194, His-196, Glu-201, and His-243.

Belongs to the KduI family. It depends on Zn(2+) as a cofactor.

The catalysed reaction is 5-dehydro-4-deoxy-D-glucuronate = 3-deoxy-D-glycero-2,5-hexodiulosonate. It participates in glycan metabolism; pectin degradation; 2-dehydro-3-deoxy-D-gluconate from pectin: step 4/5. In terms of biological role, catalyzes the isomerization of 5-dehydro-4-deoxy-D-glucuronate to 3-deoxy-D-glycero-2,5-hexodiulosonate. This chain is 4-deoxy-L-threo-5-hexosulose-uronate ketol-isomerase, found in Halalkalibacterium halodurans (strain ATCC BAA-125 / DSM 18197 / FERM 7344 / JCM 9153 / C-125) (Bacillus halodurans).